The primary structure comprises 199 residues: Protein-methionine-sulfoxide reductase heme-binding subunit MsrQ (199 aa).

The next 6 helical transmembrane spans lie at 8-28 (IAWLKVFLHLAGFLPLVWLFW), 54-74 (FLLATLLVAPLARYAKQPLLI), 82-102 (LWCFAWATLHLTSYTLLELGI), 116-136 (PYLTLGMICWVILLALAATST), 149-169 (LLHNFVYLVAILAPIHYLWSV), and 171-191 (IVSPQPIIYALLAVVLLACRY).

This sequence belongs to the MsrQ family. Heterodimer of a catalytic subunit (MsrP) and a heme-binding subunit (MsrQ). The cofactor is FMN. Heme b is required as a cofactor.

The protein localises to the cell inner membrane. In terms of biological role, part of the MsrPQ system that repairs oxidized periplasmic proteins containing methionine sulfoxide residues (Met-O), using respiratory chain electrons. Thus protects these proteins from oxidative-stress damage caused by reactive species of oxygen and chlorine generated by the host defense mechanisms. MsrPQ is essential for the maintenance of envelope integrity under bleach stress, rescuing a wide series of structurally unrelated periplasmic proteins from methionine oxidation. MsrQ provides electrons for reduction to the reductase catalytic subunit MsrP, using the quinone pool of the respiratory chain. This Klebsiella pneumoniae (strain 342) protein is Protein-methionine-sulfoxide reductase heme-binding subunit MsrQ.